Reading from the N-terminus, the 297-residue chain is Hydroxysqualene synthase (297 aa).

It belongs to the phytoene/squalene synthase family. HpnC subfamily.

The enzyme catalyses presqualene diphosphate + H2O = hydroxysqualene + diphosphate. The protein operates within secondary metabolite biosynthesis; hopanoid biosynthesis. In terms of biological role, involved in the biosynthesis of the hopanoid precursor squalene (SQ) from farnesyl diphosphate (FPP). Catalyzes the second step, the conversion of presqualene diphosphate (PSPP) to hydroxysqualene (HSQ). This chain is Hydroxysqualene synthase, found in Zymomonas mobilis subsp. mobilis (strain ATCC 31821 / ZM4 / CP4).